The sequence spans 25 residues: Gamma-conotoxin PiVIIA (25 aa).

3 disulfides stabilise this stretch: C1–C15, C8–C19, and C14–C24. A 4-hydroxyproline modification is found at P4. A 4-carboxyglutamate mark is found at E13 and E20.

The protein belongs to the conotoxin O2 superfamily. Expressed by the venom duct.

Its subcellular location is the secreted. Micromolar concentrations of PiVIIA increase the magnitude of the macroscopic calcium current in DRG neurons from rat. An increase, even modest of the calcium current, may have a significant impact in the excitability and electrical activity of neurons, and may set up PiVIIA as a member of the pharmacological family of the gamma-conotoxins. This Conus princeps (Prince cone) protein is Gamma-conotoxin PiVIIA.